We begin with the raw amino-acid sequence, 232 residues long: uncharacterized protein (232 aa).

An N-terminal signal peptide occupies residues 1 to 18 (MGILKSLFTLGKSFISQA). Positions 207–232 (AEAGIGGSNKSSAQDVLARLQRQQGE) are disordered.

This sequence belongs to the PspA/Vipp/IM30 family.

This is an uncharacterized protein from Escherichia coli O6:H1 (strain CFT073 / ATCC 700928 / UPEC).